Here is a 366-residue protein sequence, read N- to C-terminus: Dual-specificity RNA methyltransferase RlmN (366 aa).

Catalysis depends on glutamate 102, which acts as the Proton acceptor. In terms of domain architecture, Radical SAM core spans 108–340 (DEGRNTLCVS…TTTRKTRGRD (233 aa)). Cysteine 115 and cysteine 345 are disulfide-bonded. [4Fe-4S] cluster contacts are provided by cysteine 122, cysteine 126, and cysteine 129. Residues 171–172 (GE), serine 203, 225–227 (SLH), and asparagine 302 contribute to the S-adenosyl-L-methionine site. Residue cysteine 345 is the S-methylcysteine intermediate of the active site.

The protein belongs to the radical SAM superfamily. RlmN family. [4Fe-4S] cluster is required as a cofactor.

The protein localises to the cytoplasm. It carries out the reaction adenosine(2503) in 23S rRNA + 2 reduced [2Fe-2S]-[ferredoxin] + 2 S-adenosyl-L-methionine = 2-methyladenosine(2503) in 23S rRNA + 5'-deoxyadenosine + L-methionine + 2 oxidized [2Fe-2S]-[ferredoxin] + S-adenosyl-L-homocysteine. The enzyme catalyses adenosine(37) in tRNA + 2 reduced [2Fe-2S]-[ferredoxin] + 2 S-adenosyl-L-methionine = 2-methyladenosine(37) in tRNA + 5'-deoxyadenosine + L-methionine + 2 oxidized [2Fe-2S]-[ferredoxin] + S-adenosyl-L-homocysteine. Its function is as follows. Specifically methylates position 2 of adenine 2503 in 23S rRNA and position 2 of adenine 37 in tRNAs. m2A2503 modification seems to play a crucial role in the proofreading step occurring at the peptidyl transferase center and thus would serve to optimize ribosomal fidelity. The sequence is that of Dual-specificity RNA methyltransferase RlmN from Methylococcus capsulatus (strain ATCC 33009 / NCIMB 11132 / Bath).